A 479-amino-acid polypeptide reads, in one-letter code: Cardiolipin synthase A (479 aa).

The next 2 helical transmembrane spans lie at 8–28 (FFGYVLGFIHLLGTGAAIHAL) and 38–58 (IAWAMPLLFIPYFTLLPYLVF). PLD phosphodiesterase domains follow at residues 218–245 (INFRNHRKIVVVDGLKGYIGGHNVGDEY) and 392–419 (EPGFLHQKVVLVDNEITAIGSANLDNRS). Residues His223, Lys225, Asp230, His397, Lys399, and Asp404 contribute to the active site.

The protein belongs to the phospholipase D family. Cardiolipin synthase subfamily. ClsA sub-subfamily.

It is found in the cell inner membrane. The enzyme catalyses 2 a 1,2-diacyl-sn-glycero-3-phospho-(1'-sn-glycerol) = a cardiolipin + glycerol. In terms of biological role, catalyzes the reversible phosphatidyl group transfer from one phosphatidylglycerol molecule to another to form cardiolipin (CL) (diphosphatidylglycerol) and glycerol. In Pseudomonas syringae pv. syringae (strain B728a), this protein is Cardiolipin synthase A.